Consider the following 626-residue polypeptide: Polypeptide N-acetylgalactosaminyltransferase 5 (626 aa).

Over Met1 to Lys11 the chain is Cytoplasmic. A helical; Signal-anchor for type II membrane protein transmembrane segment spans residues Val12 to Ser31. Asn32 carries an N-linked (GlcNAc...) asparagine glycan. Topologically, residues Asn32–Ser626 are lumenal. 5 cysteine pairs are disulfide-bonded: Cys165–Cys399, Cys390–Cys466, Cys502–Cys521, Cys544–Cys557, and Cys583–Cys598. The tract at residues Leu174 to Arg284 is catalytic subdomain A. Substrate-binding residues include Asp215 and Arg245. Asp268 serves as a coordination point for Mn(2+). Substrate is bound at residue Ser269. His270 is a Mn(2+) binding site. Asn338 carries an N-linked (GlcNAc...) asparagine glycan. The tract at residues Pro345–Arg407 is catalytic subdomain B. Position 376 (Trp376) interacts with substrate. Position 404 (His404) interacts with Mn(2+). 2 residues coordinate substrate: Arg407 and Tyr412. One can recognise a Ricin B-type lectin domain in the interval Ala488–Lys610.

It belongs to the glycosyltransferase 2 family. GalNAc-T subfamily. Mn(2+) is required as a cofactor.

It localises to the golgi apparatus membrane. It catalyses the reaction L-seryl-[protein] + UDP-N-acetyl-alpha-D-galactosamine = a 3-O-[N-acetyl-alpha-D-galactosaminyl]-L-seryl-[protein] + UDP + H(+). The enzyme catalyses L-threonyl-[protein] + UDP-N-acetyl-alpha-D-galactosamine = a 3-O-[N-acetyl-alpha-D-galactosaminyl]-L-threonyl-[protein] + UDP + H(+). Its pathway is protein modification; protein glycosylation. Functionally, catalyzes the initial reaction in O-linked oligosaccharide biosynthesis, the transfer of an N-acetyl-D-galactosamine residue to a serine or threonine residue on the protein receptor. In Caenorhabditis elegans, this protein is Polypeptide N-acetylgalactosaminyltransferase 5 (gly-5).